We begin with the raw amino-acid sequence, 914 residues long: UPF0182 protein Syncc9605_1323 (914 aa).

The next 9 helical transmembrane spans lie at 4–24, 37–57, 81–101, 123–143, 152–172, 195–215, 240–260, 285–305, and 312–332; these read LLLLLPLVVVAARMQIEWLWF, WLLQVLLAGVAMLPLLAARAW, IALLICAVVVLISALLTLDLL, RIGSVVKLVQVGGIGLAMTWL, IVAASWVVVVSRTWGIWSLAL, FAGLHLALDLLLLGATFTLVF, MRLIRLLSALLLFGAAGLVWL, LPLRGFATLLLLLMGLALLLP, and QFLALALATLVMLETLATPLT.

It belongs to the UPF0182 family.

The protein resides in the cell membrane. This Synechococcus sp. (strain CC9605) protein is UPF0182 protein Syncc9605_1323.